The chain runs to 427 residues: UDP-N-acetylglucosamine 1-carboxyvinyltransferase 1 (427 aa).

Residue 24-25 (KN) coordinates phosphoenolpyruvate. A UDP-N-acetyl-alpha-D-glucosamine-binding site is contributed by Arg-97. Cys-121 serves as the catalytic Proton donor. Cys-121 bears the 2-(S-cysteinyl)pyruvic acid O-phosphothioketal mark. Residues 126 to 130 (RPIDL), Asp-309, and Val-331 each bind UDP-N-acetyl-alpha-D-glucosamine.

Belongs to the EPSP synthase family. MurA subfamily.

It localises to the cytoplasm. The enzyme catalyses phosphoenolpyruvate + UDP-N-acetyl-alpha-D-glucosamine = UDP-N-acetyl-3-O-(1-carboxyvinyl)-alpha-D-glucosamine + phosphate. Its pathway is cell wall biogenesis; peptidoglycan biosynthesis. Functionally, cell wall formation. Adds enolpyruvyl to UDP-N-acetylglucosamine. This Lactococcus lactis subsp. lactis (strain IL1403) (Streptococcus lactis) protein is UDP-N-acetylglucosamine 1-carboxyvinyltransferase 1.